Here is a 591-residue protein sequence, read N- to C-terminus: ESX-1 secretion system protein EccCb1 (591 aa).

FtsK domains are found at residues 65–259 (LQDV…NETQ) and 359–545 (LTPA…EKQE). ATP is bound by residues 84 to 91 (GAPQTGKS) and 376 to 383 (GAAKSGKT).

As to quaternary structure, part of the ESX-1 / type VII secretion system (T7SS), which is composed of cytosolic and membrane components. The ESX-1 membrane complex is composed of EccB1, EccCa1, EccCb1, EccD1 and EccE1. Interacts with EccCa1, EspK and the C-terminus of EsxB. Residues 1-261 interact with EsxB and an artificial EsxB-EsxA heterodimer.

The protein localises to the cytoplasm. Its activity is regulated as follows. EsxB binding to the second FtsK domain of EccCb1 causes multimerization; a subsequent unknown step relieves the allosteric inhibition of linker 2 on FtsK domain 1 (in EccCa1 subunit), activating the ATPase activity. Functionally, part of the ESX-1 specialized secretion system, which delivers several virulence factors to host cells during infection, including the key virulence factors EsxA (ESAT-6) and EsxB (CFP-10). EccCb1 may link the cytosolic components of the system with the membrane components. This chain is ESX-1 secretion system protein EccCb1, found in Mycobacterium tuberculosis (strain ATCC 25618 / H37Rv).